The following is a 405-amino-acid chain: Potassium channel subfamily K member 13 (405 aa).

Residues M1–R19 are Cytoplasmic-facing. The helical transmembrane segment at F20–A40 threads the bilayer. Residues N59 and N65 are each glycosylated (N-linked (GlcNAc...) asparagine). The pore-forming intramembrane region spans W95–M115. K(+)-binding residues include T110, I111, and G112. Residues T110–M115 form a selectivity filter 1 region. A helical membrane pass occupies residues I125–F145. Over L146–S193 the chain is Cytoplasmic. A helical transmembrane segment spans residues V194–A214. Positions Y224–V244 form an intramembrane region, pore-forming. K(+) contacts are provided by T237, I238, G239, and F240. A selectivity filter 2 region spans residues T237–D242. A helical transmembrane segment spans residues F263 to I283. At K284 to R405 the chain is on the cytoplasmic side.

The protein belongs to the two pore domain potassium channel (TC 1.A.1.8) family. In terms of assembly, homodimer. Heterodimer with KCNK12.

It is found in the cell membrane. It carries out the reaction K(+)(in) = K(+)(out). K(+) channel that conducts outward rectifying tonic currents potentiated by purinergic signals. Homo- and heterodimerizes to form functional channels with distinct regulatory and gating properties. Contributes most of K(+) currents at the plasma membrane of resting microglia. Maintains a depolarized membrane potential required for proper ramified microglia morphology and phagocytosis, selectively mediating microglial pruning of presynaptic compartments at hippocampal excitatory synapses. Upon local release of ATP caused by neuronal injury or infection, it is potentiated by P2RY12 and P2RX7 receptor signaling and contributes to ATP-triggered K(+) efflux underlying microglial NLRP3 inflammasome assembly and IL1B release. This is Potassium channel subfamily K member 13 from Mus musculus (Mouse).